The sequence spans 315 residues: Aspartate carbamoyltransferase catalytic subunit (315 aa).

Residues Arg-64 and Thr-65 each contribute to the carbamoyl phosphate site. Residue Lys-93 participates in L-aspartate binding. Carbamoyl phosphate is bound by residues Arg-114, His-142, and Gln-145. L-aspartate contacts are provided by Arg-175 and Arg-237. Residues Leu-276 and Pro-277 each coordinate carbamoyl phosphate.

It belongs to the aspartate/ornithine carbamoyltransferase superfamily. ATCase family. In terms of assembly, heterooligomer of catalytic and regulatory chains.

The enzyme catalyses carbamoyl phosphate + L-aspartate = N-carbamoyl-L-aspartate + phosphate + H(+). The protein operates within pyrimidine metabolism; UMP biosynthesis via de novo pathway; (S)-dihydroorotate from bicarbonate: step 2/3. Catalyzes the condensation of carbamoyl phosphate and aspartate to form carbamoyl aspartate and inorganic phosphate, the committed step in the de novo pyrimidine nucleotide biosynthesis pathway. The sequence is that of Aspartate carbamoyltransferase catalytic subunit from Thermofilum pendens (strain DSM 2475 / Hrk 5).